A 1544-amino-acid polypeptide reads, in one-letter code: Lysine-specific demethylase 5B (1544 aa).

The segment covering 1 to 14 has biased composition (pro residues); that stretch reads MEPATTLPPGPRPA. Positions 1–22 are disordered; it reads MEPATTLPPGPRPALPLGGPGP. In terms of domain architecture, JmjN spans 32-73; it reads CPVFEPSWEEFADPFAFIHKIRPIAEQTGICKVRPPPDWQPP. Residues 97–187 form the ARID domain; the sequence is TRVKLNFLDQ…ILNPYNLFLS (91 aa). Glycyl lysine isopeptide (Lys-Gly) (interchain with G-Cter in SUMO2) cross-links involve residues K148, K204, K209, K242, K274, and K278. Positions 200–228 are disordered; that stretch reads TSDTKDKEYKPHDIPQRQSVQPAETCPPA. Over residues 202 to 214 the composition is skewed to basic and acidic residues; sequence DTKDKEYKPHDIP. Residues 269–297 form a disordered region; sequence NEKEMKSTIKQEPTEKKDCELESEKEKPK. The PHD-type 1 zinc-finger motif lies at 309–359; that stretch reads LYVCLLCGSGNDEDRLLLCDGCDDSYHTFCLVPPLHDVPKGDWRCPKCLAQ. Residue Y425 participates in 2-oxoglutarate binding. The JmjC domain occupies 453–619; it reads EYLDSGWNLN…LGRQCVEHYR (167 aa). Residues H499 and E501 each contribute to the Fe cation site. Residues S507, N509, and K517 each contribute to the 2-oxoglutarate site. H587 serves as a coordination point for Fe cation. The C5HC2 zinc-finger motif lies at 692–744; the sequence is CIKCKTTCFMSAISCSCKPGLLVCLHHVKELCSCPPYKYNLRYRYTLDDLYPM. K769 is covalently cross-linked (Glycyl lysine isopeptide (Lys-Gly) (interchain with G-Cter in SUMO2)). K832 is modified (N6-acetyllysine). At S986 the chain carries Phosphoserine. The segment at 1176 to 1224 adopts a PHD-type 2 zinc-finger fold; that stretch reads MKVCLCQKTPATPMIQCELCRDAFHTSCVAAPSISQSSRIWLCPHCRRS. The span at 1297–1314 shows a compositional bias: polar residues; the sequence is QASATDKVSQPPGTTSFS. Residues 1297–1318 are disordered; sequence QASATDKVSQPPGTTSFSLPDD. Residue S1328 is modified to Phosphoserine. The segment covering 1374 to 1388 has biased composition (polar residues); it reads PSSVQQADRSSPVRS. The disordered stretch occupies residues 1374-1447; that stretch reads PSSVQQADRS…IKLSHPKDMD (74 aa). A compositionally biased stretch (basic and acidic residues) spans 1389–1427; it reads SSEKNDCLRGKRDAINSPERKLKRRPEREGLPSERWDRV. Over residues 1428–1441 the composition is skewed to basic residues; it reads KHMRTPQKKKIKLS. K1450 is covalently cross-linked (Glycyl lysine isopeptide (Lys-Gly) (interchain with G-Cter in SUMO2)). The residue at position 1456 (S1456) is a Phosphoserine. The PHD-type 3 zinc finger occupies 1484–1538; it reads DAICPAVSCLQPEGDEVDWVQCDGSCNQWFHQVCVGVSPEMAEKEDYICVRCTGK.

It belongs to the JARID1 histone demethylase family. In terms of assembly, interacts with FOXG1B, PAX9, MYC, MYCN and RB1. Interacts with HDAC1, HDAC4, HDAC5 and HDAC7. Interacts (via PHD-type 1 zinc finger) with histone H3 unmodified at 'Lys-4'; the interaction is inhibited when histone H3 is methylated at 'Arg-2' or 'Lys-4'. The cofactor is Fe(2+). In terms of tissue distribution, present at highest levels in testis, where it is enriched in spermatogonia and pachytene cells (at protein level).

Its subcellular location is the nucleus. The enzyme catalyses N(6),N(6),N(6)-trimethyl-L-lysyl(4)-[histone H3] + 3 2-oxoglutarate + 3 O2 = L-lysyl(4)-[histone H3] + 3 formaldehyde + 3 succinate + 3 CO2. Functionally, histone demethylase that demethylates 'Lys-4' of histone H3, thereby playing a central role in histone code. Does not demethylate histone H3 'Lys-9' or H3 'Lys-27'. Demethylates trimethylated, dimethylated and monomethylated H3 'Lys-4'. Acts as a transcriptional corepressor for FOXG1B and PAX9. Represses the CLOCK-BMAL1 heterodimer-mediated transcriptional activation of the core clock component PER2. The chain is Lysine-specific demethylase 5B (Kdm5b) from Mus musculus (Mouse).